Reading from the N-terminus, the 432-residue chain is Calcium uptake protein 2, mitochondrial (432 aa).

Residues 1–22 constitute a mitochondrion transit peptide; sequence MAAAAGRSAWLAAWGGRLRRGL. The EF-hand 1 domain maps to 169–204; the sequence is KPHSGFHVAFKMLDVDGNEMIERKEFVKLQKIISKQ. Ca(2+) is bound by residues Asp-182, Asp-184, Asn-186, Met-188, Glu-190, and Glu-193. Phosphoserine is present on Ser-202. The EF-hand 2; degenerate domain occupies 224-259; it reads EPGVNTTLQVRFFGKRGEKKLHYKEFRRFMENLQTE. The EF-hand 3; degenerate domain occupies 290–325; that stretch reads TENKDIYWRNVREKLSVGESISLDEFKSFCHFTTHL. An EF-hand 4 domain is found at 359–394; the sequence is LSDNLLDTVFKIFDLDGDECLSHGEFLGVLKNRMHR. Asp-372, Asp-374, Asp-376, Cys-378, and Glu-383 together coordinate Ca(2+).

Belongs to the MICU1 family. MICU2 subfamily. Heterodimer; disulfide-linked; heterodimerizes with MICU1. Component of the uniplex complex, composed of MCU, EMRE/SMDT1, MICU1 and MICU2 in a 4:4:1:1 stoichiometry. As to expression, predominantly expressed in stomach, intestine, skeletal muscle, kidney, heart, testis, prostate and uterus.

The protein localises to the mitochondrion intermembrane space. Its subcellular location is the mitochondrion inner membrane. Its function is as follows. Calcium sensor of the mitochondrial calcium uniporter (MCU) channel, which senses calcium level via its EF-hand domains. MICU1 and MICU2 form a disulfide-linked heterodimer that stimulates and inhibits MCU activity, depending on the concentration of calcium. At low calcium levels, MICU1 occludes the pore of the MCU channel, preventing mitochondrial calcium uptake. At higher calcium levels, calcium-binding to MICU1 and MICU2 induces a conformational change that weakens MCU-MICU1 interactions and moves the MICU1-MICU2 heterodimer away from the pore, allowing calcium permeation through the MCU channel. The chain is Calcium uptake protein 2, mitochondrial from Mus musculus (Mouse).